A 512-amino-acid chain; its full sequence is 2,3-bisphosphoglycerate-independent phosphoglycerate mutase (512 aa).

Asp-12 and Ser-62 together coordinate Mn(2+). Catalysis depends on Ser-62, which acts as the Phosphoserine intermediate. Substrate contacts are provided by residues His-123, 153–154 (RD), Arg-185, Arg-191, 260–263 (RPDR), and Lys-333. Residues Asp-400, His-404, Asp-441, His-442, and His-460 each contribute to the Mn(2+) site.

Belongs to the BPG-independent phosphoglycerate mutase family. As to quaternary structure, monomer. The cofactor is Mn(2+).

It carries out the reaction (2R)-2-phosphoglycerate = (2R)-3-phosphoglycerate. Its pathway is carbohydrate degradation; glycolysis; pyruvate from D-glyceraldehyde 3-phosphate: step 3/5. In terms of biological role, catalyzes the interconversion of 2-phosphoglycerate and 3-phosphoglycerate. In Clostridium beijerinckii (strain ATCC 51743 / NCIMB 8052) (Clostridium acetobutylicum), this protein is 2,3-bisphosphoglycerate-independent phosphoglycerate mutase.